Reading from the N-terminus, the 673-residue chain is UvrABC system protein B (673 aa).

In terms of domain architecture, Helicase ATP-binding spans 26–183 (EGLEDGLAHQ…RRLAELQYTR (158 aa)). 39 to 46 (GVTGSGKT) serves as a coordination point for ATP. Positions 92–115 (YYDYYQPEAYVPSSDTFIEKDASV) match the Beta-hairpin motif. Residues 431 to 597 (QVDDLLSEIR…GLNKKVVDIL (167 aa)) form the Helicase C-terminal domain. In terms of domain architecture, UVR spans 633-668 (QQKIHELEGQMMQHAQNLEFEEAAQIRDQLHQLREL).

This sequence belongs to the UvrB family. As to quaternary structure, forms a heterotetramer with UvrA during the search for lesions. Interacts with UvrC in an incision complex.

The protein resides in the cytoplasm. Its function is as follows. The UvrABC repair system catalyzes the recognition and processing of DNA lesions. A damage recognition complex composed of 2 UvrA and 2 UvrB subunits scans DNA for abnormalities. Upon binding of the UvrA(2)B(2) complex to a putative damaged site, the DNA wraps around one UvrB monomer. DNA wrap is dependent on ATP binding by UvrB and probably causes local melting of the DNA helix, facilitating insertion of UvrB beta-hairpin between the DNA strands. Then UvrB probes one DNA strand for the presence of a lesion. If a lesion is found the UvrA subunits dissociate and the UvrB-DNA preincision complex is formed. This complex is subsequently bound by UvrC and the second UvrB is released. If no lesion is found, the DNA wraps around the other UvrB subunit that will check the other stand for damage. This is UvrABC system protein B from Salmonella arizonae (strain ATCC BAA-731 / CDC346-86 / RSK2980).